The primary structure comprises 585 residues: Proline-rich protein 14 (585 aa).

Methionine 1 carries the N-acetylmethionine modification. The segment at 1-135 is sufficient for heterochromatin association in interphase and chromatin association in anaphase; it reads MDLPGDSSPP…TLRRRSRTTP (135 aa). Disordered stretches follow at residues 23-46, 73-150, and 189-241; these read ALWG…PLEK, TSIP…RAPQ, and IVRQ…RPRL. The segment at 85–378 is required for the interaction with GRB2 and sufficient to promote the phosphorylation of AKT and cell proliferation; it reads PVHRQPPASP…MARAPPPPRP (294 aa). A compositionally biased stretch (basic residues) spans 119–132; the sequence is RIHRTSSTLRRRSR. The interval 136 to 365 is required for nuclear lamina association; sequence GPEEGPSQKV…RPRPRRHTVG (230 aa). Positions 193–205 are enriched in pro residues; sequence PTPPPGDLEPPFQ. Phosphoserine is present on serine 277. Disordered regions lie at residues 290–445 and 525–557; these read EAEQ…KVSR and DSSL…PDVG. The segment covering 337–356 has biased composition (pro residues); it reads LGPPGPGTCTWPPAPPQPSR. Over residues 393–409 the composition is skewed to low complexity; the sequence is SPSLTTSCSSTASTSFS. Positions 518–535 are required for nuclear localization; sequence RRAVEFRDSSLPRSRRPS.

Interacts (via proline-rich region) with GRB2 (via SH3 domain 2). Interacts (via N-terminus) with CBX5.

Its subcellular location is the chromosome. It is found in the nucleus. The protein resides in the nucleus lamina. It localises to the nucleoplasm. In terms of biological role, functions in tethering peripheral heterochromatin to the nuclear lamina during interphase, possibly through the interaction with heterochromatin protein CBX5/HP1 alpha. Might play a role in reattaching heterochromatin to the nuclear lamina at mitotic exit. Promotes myoblast differentiation during skeletal myogenesis, possibly by stimulating transcription factor MyoD activity via binding to CBX5/HP1 alpha. Involved in the positive regulation of the PI3K-Akt-mTOR signaling pathway and in promoting cell proliferation, possibly via binding to GRB2. In Homo sapiens (Human), this protein is Proline-rich protein 14 (PRR14).